A 250-amino-acid polypeptide reads, in one-letter code: Coproheme decarboxylase (250 aa).

Fe-coproporphyrin III-binding positions include Arg-131, 145–149, His-172, and Gln-185; that span reads YPMNK. The active site involves Tyr-145.

This sequence belongs to the ChdC family. Type 1 subfamily. The cofactor is Fe-coproporphyrin III.

It carries out the reaction Fe-coproporphyrin III + 2 H2O2 + 2 H(+) = heme b + 2 CO2 + 4 H2O. It catalyses the reaction Fe-coproporphyrin III + H2O2 + H(+) = harderoheme III + CO2 + 2 H2O. The enzyme catalyses harderoheme III + H2O2 + H(+) = heme b + CO2 + 2 H2O. It functions in the pathway porphyrin-containing compound metabolism; protoheme biosynthesis. In terms of biological role, involved in coproporphyrin-dependent heme b biosynthesis. Catalyzes the decarboxylation of Fe-coproporphyrin III (coproheme) to heme b (protoheme IX), the last step of the pathway. The reaction occurs in a stepwise manner with a three-propionate intermediate. The polypeptide is Coproheme decarboxylase (Staphylococcus aureus (strain USA300 / TCH1516)).